Reading from the N-terminus, the 41-residue chain is Photosystem II reaction center protein Y (41 aa).

An N-formylmethionine modification is found at Met-1. Residues 1 to 4 (MDWR) are Lumenal-facing. The helical transmembrane segment at 5-23 (VLVVLLPVLLAAGWAVRNI) threads the bilayer. Residues 24–41 (LPYAVKQVQKLLQKAKAA) lie on the Cytoplasmic side of the membrane.

This sequence belongs to the PsbY family. As to quaternary structure, PSII is composed of 1 copy each of membrane proteins PsbA, PsbB, PsbC, PsbD, PsbE, PsbF, PsbH, PsbI, PsbJ, PsbK, PsbL, PsbM, PsbT, PsbX, PsbY, PsbZ, Psb30/Ycf12, peripheral proteins PsbO, CyanoQ (PsbQ), PsbU, PsbV and a large number of cofactors. It forms dimeric complexes. This protein is only loosely associated with PSII, and is not often found in crystals. Found on the exterior of the PSII dimer, near cytochrome b559 (psbE and psbF). The cofactor is PSII binds multiple chlorophylls, carotenoids and specific lipids..

The protein localises to the cellular thylakoid membrane. In terms of biological role, loosely associated component of the core of photosystem II, it is not always seen in crystals. PSII is a light-driven water plastoquinone oxidoreductase, using light energy to abstract electrons from H(2)O, generating a proton gradient subsequently used for ATP formation. This Thermosynechococcus vestitus (strain NIES-2133 / IAM M-273 / BP-1) protein is Photosystem II reaction center protein Y.